The primary structure comprises 534 residues: DM7 family protein GE17491 (534 aa).

Belongs to the DM7 family.

The sequence is that of DM7 family protein GE17491 from Drosophila yakuba (Fruit fly).